The primary structure comprises 352 residues: Carbohydrate sulfotransferase 11 (352 aa).

The Cytoplasmic portion of the chain corresponds to 1–16 (MKPALLEVMRMNRICR). Residues 17-37 (MVLATCLGSFILVIFYFQSML) traverse the membrane as a helical; Signal-anchor for type II membrane protein segment. Residues 38–352 (HPVMRRNPFG…YSVPNYLKLD (315 aa)) are Lumenal-facing. Residues 124-130 (PKVACTN) and 186-194 (REPFERLVS) each bind 3'-phosphoadenylyl sulfate. N-linked (GlcNAc...) asparagine glycans are attached at residues Asn-205, Asn-223, Asn-321, and Asn-342.

It belongs to the sulfotransferase 2 family. N-glycosylated; required for activity and stability.

It is found in the golgi apparatus membrane. The enzyme catalyses chondroitin beta-D-glucuronate + n 3'-phosphoadenylyl sulfate = chondroitin 4'-sulfate + n adenosine 3',5'-bisphosphate + n H(+). In terms of biological role, catalyzes the transfer of sulfate to position 4 of the N-acetylgalactosamine (GalNAc) residue of chondroitin. Chondroitin sulfate constitutes the predominant proteoglycan present in cartilage and is distributed on the surfaces of many cells and extracellular matrices. Can also sulfate Gal residues in desulfated dermatan sulfate. Preferentially sulfates in GlcA-&gt;GalNAc unit than in IdoA-&gt;GalNAc unit. Does not form 4, 6-di-O-sulfated GalNAc when chondroitin sulfate C is used as an acceptor. This Rattus norvegicus (Rat) protein is Carbohydrate sulfotransferase 11 (Chst11).